The sequence spans 466 residues: tRNA dimethylallyltransferase 2 (466 aa).

27-34 (GPTGSGKS) provides a ligand contact to ATP. 29–34 (TGSGKS) is a substrate binding site. The interaction with substrate tRNA stretch occupies residues 52-55 (DAMQ). Residues 433–466 (WEHHKQGRTHRKRTTRHKNSQTYKNREVQEAEVN) form a disordered region. The segment covering 437–451 (KQGRTHRKRTTRHKN) has biased composition (basic residues). The span at 456–466 (KNREVQEAEVN) shows a compositional bias: basic and acidic residues.

Belongs to the IPP transferase family. The cofactor is Mg(2+). As to expression, expressed ubiquitously, with highest expression in proliferating tissues.

It localises to the cytoplasm. It catalyses the reaction adenosine(37) in tRNA + dimethylallyl diphosphate = N(6)-dimethylallyladenosine(37) in tRNA + diphosphate. In terms of biological role, catalyzes the transfer of a dimethylallyl group onto the adenine at position 37 in tRNAs that read codons beginning with uridine, leading to the formation of N6-(dimethylallyl)adenosine (i(6)A). Involved in the cis-type cytokinin biosynthesis. In Arabidopsis thaliana (Mouse-ear cress), this protein is tRNA dimethylallyltransferase 2 (IPT2).